The sequence spans 132 residues: MNALIREIEQAYMPKNFPEFRVGDTVRVHVKVKERNKERIQVFEGVVIRIKGSGTGKTFTVRKESYGVGIERIFPFACPSIDKVEVTKRGKVRRAKLYYLRERRGKAARIREIKEWEIRKRAEESKAAKENQ.

This sequence belongs to the bacterial ribosomal protein bL19 family.

In terms of biological role, this protein is located at the 30S-50S ribosomal subunit interface and may play a role in the structure and function of the aminoacyl-tRNA binding site. This Persephonella marina (strain DSM 14350 / EX-H1) protein is Large ribosomal subunit protein bL19.